The chain runs to 516 residues: Lysine--tRNA ligase (516 aa).

Residues 1 to 23 are disordered; it reads MTEPNRAQAAPASPTAELPAADE. 2 residues coordinate Mg(2+): Glu426 and Glu433.

It belongs to the class-II aminoacyl-tRNA synthetase family. As to quaternary structure, homodimer. Mg(2+) serves as cofactor.

The protein localises to the cytoplasm. It carries out the reaction tRNA(Lys) + L-lysine + ATP = L-lysyl-tRNA(Lys) + AMP + diphosphate. This chain is Lysine--tRNA ligase, found in Cupriavidus pinatubonensis (strain JMP 134 / LMG 1197) (Cupriavidus necator (strain JMP 134)).